The sequence spans 176 residues: Pituitary adenylate cyclase-activating polypeptide (176 aa).

A signal peptide spans 1–24; the sequence is MTMCSGARLALLVYGIIMHSSVYS. Positions 25–79 are excised as a propeptide; it reads SPAAAGLRFPGIRPEEEAYGEDGNPLPDFDGSEPPGAGSPASAPRAAAAWYRPAG. A disordered region spans residues 39–68; sequence EEEAYGEDGNPLPDFDGSEPPGAGSPASAP. The span at 56 to 68 shows a compositional bias: low complexity; sequence SEPPGAGSPASAP. The interval 150-158 is important for receptor binding; that stretch reads VKKYLAAVL. Leu-158 is subject to Leucine amide. Lys-169 is modified (lysine amide). Positions 173–176 are excised as a propeptide; it reads IAYL.

Belongs to the glucagon family.

It is found in the secreted. Functionally, PACAP is a neuropeptide involved in diverse array of physiological processes through activating the PACAP subfamily of class B1 G protein-coupled receptors: VIP receptor 1 (VIPR1), VIP receptor 2 (VIPR2), and PACAP type I receptor (ADCYAP1R1). Exerts neuroprotective and general cytoprotective effects due to anti-apoptotic, anti-inflammatory, and antioxidant actions. Promotes neuron projection development through the RAPGEF2/Rap1/B-Raf/ERK pathway. In chromaffin cells, induces long-lasting increase of intracellular calcium concentrations and neuroendocrine secretion. Involved in the control of glucose homeostasis, induces insulin secretion by pancreatic beta cells. PACAP exists in two bioactive forms from proteolysis of the same precursor protein, PACAP27 and PACAP38, which differ by eleven amino acid residues in the C-terminus. This chain is Pituitary adenylate cyclase-activating polypeptide, found in Homo sapiens (Human).